The sequence spans 193 residues: Phosphatidylglycerophosphatase and protein-tyrosine phosphatase 1 (193 aa).

The transit peptide at 1–31 (MAASAWLEAGLARVLFYPTLLYTVFRGRVGG) directs the protein to the mitochondrion. A Tyrosine-protein phosphatase domain is found at 37 to 188 (WYHRIDHTVL…LKEFHKEIAA (152 aa)). N6-succinyllysine is present on lysine 85. Residue cysteine 132 is the Phosphocysteine intermediate of the active site.

It belongs to the protein-tyrosine phosphatase family. Non-receptor class dual specificity subfamily. As to quaternary structure, interacts with STYXL1; the interaction inhibits PTPMT1 catalytic activity. As to expression, expressed in liver and in pancreatic beta cells.

The protein resides in the mitochondrion inner membrane. The enzyme catalyses O-phospho-L-tyrosyl-[protein] + H2O = L-tyrosyl-[protein] + phosphate. It carries out the reaction O-phospho-L-seryl-[protein] + H2O = L-seryl-[protein] + phosphate. It catalyses the reaction O-phospho-L-threonyl-[protein] + H2O = L-threonyl-[protein] + phosphate. The catalysed reaction is a 1,2-diacyl-sn-glycero-3-phospho-(1'-sn-glycero-3'-phosphate) + H2O = a 1,2-diacyl-sn-glycero-3-phospho-(1'-sn-glycerol) + phosphate. The enzyme catalyses 1,2-di-(9Z-octadecenoyl)-sn-glycero-3-phospho-(1'-sn-glycerol-3'-phosphate) + H2O = 1,2-di-(9Z-octadecenoyl)-sn-glycero-3-phospho-(1'-sn-glycerol) + phosphate. It carries out the reaction 1,2-dioctanoyl-sn-glycero-3-phospho-(1D-myo-inositol-5-phosphate) + H2O = 1,2-dioctanoyl-sn-glycero-3-phospho-(1D-myo-inositol) + phosphate. It catalyses the reaction a 1-acyl-2-hexanoyl-sn-glycero-3-phospho-(1D-myo-inositol-5-phosphate) + H2O = a 1-acyl-2-hexanoyl-sn-glycero-3-phospho-(1D-myo-inositol) + phosphate. The catalysed reaction is 1,2-dibutyryl-sn-glycero-3-phospho-(1D-myo-inositol-5-phosphate) + H2O = 1,2-dibutyryl-sn-glycero-3-phospho-(1D-myo-inositol) + phosphate. It participates in phospholipid metabolism; phosphatidylglycerol biosynthesis; phosphatidylglycerol from CDP-diacylglycerol: step 2/2. Functionally, lipid phosphatase which dephosphorylates phosphatidylglycerophosphate (PGP) to phosphatidylglycerol (PG). PGP is an essential intermediate in the biosynthetic pathway of cardiolipin, a mitochondrial-specific phospholipid regulating the membrane integrity and activities of the organelle. Has also been shown to display phosphatase activity toward phosphoprotein substrates, specifically mediates dephosphorylation of mitochondrial proteins, thereby playing an essential role in ATP production. Has probably a preference for proteins phosphorylated on Ser and/or Thr residues compared to proteins phosphorylated on Tyr residues. Probably involved in regulation of insulin secretion in pancreatic beta cells. May prevent intrinsic apoptosis, probably by regulating mitochondrial membrane integrity. This is Phosphatidylglycerophosphatase and protein-tyrosine phosphatase 1 from Rattus norvegicus (Rat).